We begin with the raw amino-acid sequence, 86 residues long: Large ribosomal subunit protein bL27 (86 aa).

The span at 1–11 shows a compositional bias: gly residues; that stretch reads MATKKAGGGSR. The segment at 1-24 is disordered; the sequence is MATKKAGGGSRNGRDSAGRRLGVK.

The protein belongs to the bacterial ribosomal protein bL27 family.

The protein is Large ribosomal subunit protein bL27 of Rickettsia africae (strain ESF-5).